We begin with the raw amino-acid sequence, 160 residues long: Lipoprotein signal peptidase (160 aa).

3 helical membrane-spanning segments follow: residues 6–26 (VWSS…IKYL), 58–78 (LAWL…AFVL), and 95–115 (FALV…HGYV). Residues aspartate 117 and aspartate 135 contribute to the active site. The chain crosses the membrane as a helical span at residues 127-147 (SFAVFNLADAFITIGAGLIIL).

It belongs to the peptidase A8 family.

It is found in the cell inner membrane. It catalyses the reaction Release of signal peptides from bacterial membrane prolipoproteins. Hydrolyzes -Xaa-Yaa-Zaa-|-(S,diacylglyceryl)Cys-, in which Xaa is hydrophobic (preferably Leu), and Yaa (Ala or Ser) and Zaa (Gly or Ala) have small, neutral side chains.. It functions in the pathway protein modification; lipoprotein biosynthesis (signal peptide cleavage). In terms of biological role, this protein specifically catalyzes the removal of signal peptides from prolipoproteins. The polypeptide is Lipoprotein signal peptidase (Brucella abortus (strain S19)).